A 148-amino-acid polypeptide reads, in one-letter code: Protein Turandot Z (148 aa).

Residues 1–23 (MYFAIRLSFVLAVLFCLTGNGSA) form the signal peptide.

It belongs to the Turandot family.

It is found in the secreted. In terms of biological role, a humoral factor that may play a role in stress tolerance. The polypeptide is Protein Turandot Z (Drosophila sechellia (Fruit fly)).